The following is a 229-amino-acid chain: C-&gt;U-editing enzyme APOBEC-1 (229 aa).

The region spanning 10–134 (VDPTLRRRIE…QRNRQGLRDL (125 aa)) is the CMP/dCMP-type deaminase domain. A Zn(2+)-binding site is contributed by His61. Catalysis depends on Glu63, which acts as the Proton donor. Zn(2+)-binding residues include Cys93 and Cys96.

Belongs to the cytidine and deoxycytidylate deaminase family. As to quaternary structure, homodimer. Interacts with A1CF; form an mRNA editing complex. Interacts with RBM47; form an mRNA editing complex. Found in a complex with CELF2/CUGBP2 and A1CF. Interacts with HNRPAB. Interacts with SYNCRIP. Zn(2+) is required as a cofactor. In terms of tissue distribution, expressed in the spleen. Expressed at lower level in the kidney, testis, lung, brain and liver.

The protein localises to the cytoplasm. Its subcellular location is the nucleus. The catalysed reaction is a cytidine in mRNA + H2O + H(+) = a uridine in mRNA + NH4(+). It catalyses the reaction cytidine(6666) in apoB mRNA + H2O + H(+) = uridine(6666) in apoB mRNA + NH4(+). In terms of biological role, cytidine deaminase catalyzing the cytidine to uridine postranscriptional editing of a variety of mRNAs. Form complexes with cofactors that confer differential editing activity and selectivity. Responsible for the postranscriptional editing of a CAA codon for Gln to a UAA codon for stop in the apolipoprotein B mRNA. Also involved in CGA (Arg) to UGA (Stop) editing in the NF1 mRNA. May also play a role in the epigenetic regulation of gene expression by participating in DNA demethylation. The polypeptide is C-&gt;U-editing enzyme APOBEC-1 (Mus musculus (Mouse)).